Consider the following 144-residue polypeptide: 3-dehydroquinate dehydratase (144 aa).

Y22 serves as the catalytic Proton acceptor. 3 residues coordinate substrate: N74, H80, and D87. The active-site Proton donor is the H100. Residues 101–102 (LS) and R111 each bind substrate.

It belongs to the type-II 3-dehydroquinase family. Homododecamer.

It carries out the reaction 3-dehydroquinate = 3-dehydroshikimate + H2O. Its pathway is metabolic intermediate biosynthesis; chorismate biosynthesis; chorismate from D-erythrose 4-phosphate and phosphoenolpyruvate: step 3/7. Catalyzes a trans-dehydration via an enolate intermediate. This chain is 3-dehydroquinate dehydratase, found in Clostridium perfringens (strain ATCC 13124 / DSM 756 / JCM 1290 / NCIMB 6125 / NCTC 8237 / Type A).